A 432-amino-acid chain; its full sequence is Tol-Pal system protein TolB (432 aa).

Residues 1–22 (MMFKKCLSVLFTCLIFISSARA) form the signal peptide.

It belongs to the TolB family. As to quaternary structure, the Tol-Pal system is composed of five core proteins: the inner membrane proteins TolA, TolQ and TolR, the periplasmic protein TolB and the outer membrane protein Pal. They form a network linking the inner and outer membranes and the peptidoglycan layer.

The protein resides in the periplasm. Functionally, part of the Tol-Pal system, which plays a role in outer membrane invagination during cell division and is important for maintaining outer membrane integrity. The polypeptide is Tol-Pal system protein TolB (Marinomonas sp. (strain MWYL1)).